The sequence spans 362 residues: UPF0283 membrane protein Arad_2632 (362 aa).

Positions 1-11 (MTKPTEDDPKG) are enriched in basic and acidic residues. The interval 1 to 47 (MTKPTEDDPKGISRRPAAFSLEQEASREGAHTKTTAETPRRKPQSFD) is disordered. Transmembrane regions (helical) follow at residues 82–102 (FSFG…AFGL) and 118–138 (LGYT…AIVV).

Belongs to the UPF0283 family.

Its subcellular location is the cell inner membrane. In Rhizobium rhizogenes (strain K84 / ATCC BAA-868) (Agrobacterium radiobacter), this protein is UPF0283 membrane protein Arad_2632.